Here is a 665-residue protein sequence, read N- to C-terminus: DNA ligase (665 aa).

Residues 35-39, 88-89, and Glu-117 each bind NAD(+); these read DAIYD and SL. The active-site N6-AMP-lysine intermediate is Lys-119. Residues Arg-140, Glu-174, Lys-290, and Lys-314 each coordinate NAD(+). The Zn(2+) site is built by Cys-406, Cys-409, Cys-424, and Cys-429. The 78-residue stretch at 588 to 665 folds into the BRCT domain; it reads KKTERFAQLS…EEAFNELLVS (78 aa).

The protein belongs to the NAD-dependent DNA ligase family. LigA subfamily. Mg(2+) is required as a cofactor. Requires Mn(2+) as cofactor.

The catalysed reaction is NAD(+) + (deoxyribonucleotide)n-3'-hydroxyl + 5'-phospho-(deoxyribonucleotide)m = (deoxyribonucleotide)n+m + AMP + beta-nicotinamide D-nucleotide.. In terms of biological role, DNA ligase that catalyzes the formation of phosphodiester linkages between 5'-phosphoryl and 3'-hydroxyl groups in double-stranded DNA using NAD as a coenzyme and as the energy source for the reaction. It is essential for DNA replication and repair of damaged DNA. This chain is DNA ligase, found in Metamycoplasma arthritidis (strain 158L3-1) (Mycoplasma arthritidis).